Consider the following 437-residue polypeptide: Enolase 1 (437 aa).

Gln-164 contributes to the (2R)-2-phosphoglycerate binding site. Residue Glu-206 is the Proton donor of the active site. Mg(2+) is bound by residues Asp-244, Glu-289, and Asp-316. (2R)-2-phosphoglycerate contacts are provided by Lys-341, Arg-370, Ser-371, and Lys-392. Lys-341 functions as the Proton acceptor in the catalytic mechanism.

It belongs to the enolase family. Mg(2+) serves as cofactor.

Its subcellular location is the cytoplasm. It localises to the secreted. The protein localises to the cell surface. The catalysed reaction is (2R)-2-phosphoglycerate = phosphoenolpyruvate + H2O. The protein operates within carbohydrate degradation; glycolysis; pyruvate from D-glyceraldehyde 3-phosphate: step 4/5. In terms of biological role, catalyzes the reversible conversion of 2-phosphoglycerate (2-PG) into phosphoenolpyruvate (PEP). It is essential for the degradation of carbohydrates via glycolysis. The sequence is that of Enolase 1 from Desulfitobacterium hafniense (strain Y51).